The primary structure comprises 578 residues: Proteasome-associated ATPase (578 aa).

Positions 35–84 form a coiled coil; that stretch reads RHLTALEEQLGAARTRLAQVSAQNDRLATTLREARDQIVALKAEVDRLGQ. ATP is bound at residue 266–271; the sequence is GCGKTL. The docks into pockets in the proteasome alpha-ring stretch occupies residues 577–578; sequence YL.

This sequence belongs to the AAA ATPase family. As to quaternary structure, homohexamer. Assembles into a hexameric ring structure that caps the 20S proteasome core. Strongly interacts with the prokaryotic ubiquitin-like protein Pup through a hydrophobic interface; the interacting region of ARC lies in its N-terminal coiled-coil domain. There is one Pup binding site per ARC hexamer ring. Upon ATP-binding, the C-terminus of ARC interacts with the alpha-rings of the proteasome core, possibly by binding to the intersubunit pockets.

It participates in protein degradation; proteasomal Pup-dependent pathway. In terms of biological role, ATPase which is responsible for recognizing, binding, unfolding and translocation of pupylated proteins into the bacterial 20S proteasome core particle. May be essential for opening the gate of the 20S proteasome via an interaction with its C-terminus, thereby allowing substrate entry and access to the site of proteolysis. Thus, the C-termini of the proteasomal ATPase may function like a 'key in a lock' to induce gate opening and therefore regulate proteolysis. The sequence is that of Proteasome-associated ATPase from Kineococcus radiotolerans (strain ATCC BAA-149 / DSM 14245 / SRS30216).